We begin with the raw amino-acid sequence, 612 residues long: Amyloid-beta precursor-like protein (612 aa).

An N-terminal signal peptide occupies residues 1 to 21; it reads MGPSVRPGFLVVVIGLQFVAA. At 22-542 the chain is on the extracellular side; that stretch reads SMEVNSRKFE…NLYANSHANS (521 aa). A GFLD subdomain region spans residues 28 to 122; it reads RKFEPMVAFI…PFRCLVGPFQ (95 aa). The 162-residue stretch at 28 to 189 folds into the E1 domain; that stretch reads RKFEPMVAFI…SGVEFVCCPK (162 aa). 6 disulfides stabilise this stretch: cysteine 38–cysteine 60, cysteine 71–cysteine 116, cysteine 96–cysteine 103, cysteine 132–cysteine 187, cysteine 143–cysteine 173, and cysteine 157–cysteine 186. Residues asparagine 99, asparagine 108, and asparagine 150 are each glycosylated (N-linked (GlcNAc...) asparagine). The tract at residues 130-189 is cuBD subdomain; that stretch reads EHCIFDHYHDPRVCNEFDQCNETAMSKCSARGMTTQSFAMLWPCQEPGHFSGVEFVCCPK. The E2 domain occupies 223 to 419; it reads GDSKYMSKYA…KQVRPNIDKF (197 aa). Disordered regions lie at residues 251-276 and 437-490; these read ERDT…TDPK and QEPT…FDSE. Composition is skewed to basic and acidic residues over residues 439-453 and 470-483; these read PTPK…KAED and KPTE…EDIK. A helical membrane pass occupies residues 543–563; sequence VLGIAIGGVVVFIIIVVAVVM. Over 564-612 the chain is Cytoplasmic; the sequence is LKRRTQRQRVTHGFVEVDPAASPEERHVANMQMSGYENPTYKYFEMQNQ. The segment at 598-612 is required for the interaction with kinesin heavy chain and for anterograde transport in axons; it reads GYENPTYKYFEMQNQ. The YENPXY motif motif lies at 599–604; sequence YENPTY.

The protein belongs to the APP family. In terms of assembly, interacts (via cytoplasmic domain) with kinesin heavy chain. In terms of tissue distribution, expressed in the cervicothoracic ganglion (stellate ganglion) (at protein level).

It is found in the cell membrane. Its subcellular location is the cell projection. The protein localises to the axon. Its function is as follows. Acts as a kinesin I membrane receptor, thereby playing a role in axonal anterograde transport of cargo towards synapses in axons. The protein is Amyloid-beta precursor-like protein of Doryteuthis pealeii (Longfin inshore squid).